A 124-amino-acid polypeptide reads, in one-letter code: Small ribosomal subunit protein uS12 (124 aa).

Aspartate 89 is modified (3-methylthioaspartic acid). The tract at residues threonine 101–glutamate 124 is disordered.

It belongs to the universal ribosomal protein uS12 family. In terms of assembly, part of the 30S ribosomal subunit. Contacts proteins S8 and S17. May interact with IF1 in the 30S initiation complex.

With S4 and S5 plays an important role in translational accuracy. In terms of biological role, interacts with and stabilizes bases of the 16S rRNA that are involved in tRNA selection in the A site and with the mRNA backbone. Located at the interface of the 30S and 50S subunits, it traverses the body of the 30S subunit contacting proteins on the other side and probably holding the rRNA structure together. The combined cluster of proteins S8, S12 and S17 appears to hold together the shoulder and platform of the 30S subunit. This chain is Small ribosomal subunit protein uS12, found in Synechococcus sp. (strain CC9902).